A 540-amino-acid chain; its full sequence is Sterol 14-alpha demethylase (540 aa).

A helical membrane pass occupies residues Pro-41 to Ile-61. Residue Cys-485 participates in heme binding.

It belongs to the cytochrome P450 family. It depends on heme as a cofactor.

The protein resides in the membrane. The enzyme catalyses a 14alpha-methyl steroid + 3 reduced [NADPH--hemoprotein reductase] + 3 O2 = a Delta(14) steroid + formate + 3 oxidized [NADPH--hemoprotein reductase] + 4 H2O + 4 H(+). It catalyses the reaction a 14alpha-methyl steroid + reduced [NADPH--hemoprotein reductase] + O2 = a 14alpha-hydroxymethyl steroid + oxidized [NADPH--hemoprotein reductase] + H2O + H(+). It carries out the reaction a 14alpha-hydroxymethyl steroid + reduced [NADPH--hemoprotein reductase] + O2 = a 14alpha-formyl steroid + oxidized [NADPH--hemoprotein reductase] + 2 H2O + H(+). The catalysed reaction is a 14alpha-formyl steroid + reduced [NADPH--hemoprotein reductase] + O2 = a Delta(14) steroid + formate + oxidized [NADPH--hemoprotein reductase] + H2O + 2 H(+). The enzyme catalyses lanosterol + 3 reduced [NADPH--hemoprotein reductase] + 3 O2 = 4,4-dimethyl-5alpha-cholesta-8,14,24-trien-3beta-ol + formate + 3 oxidized [NADPH--hemoprotein reductase] + 4 H2O + 4 H(+). It catalyses the reaction lanosterol + reduced [NADPH--hemoprotein reductase] + O2 = 32-hydroxylanosterol + oxidized [NADPH--hemoprotein reductase] + H2O + H(+). It carries out the reaction 32-hydroxylanosterol + reduced [NADPH--hemoprotein reductase] + O2 = 32-oxolanosterol + oxidized [NADPH--hemoprotein reductase] + 2 H2O + H(+). The catalysed reaction is 32-oxolanosterol + reduced [NADPH--hemoprotein reductase] + O2 = 4,4-dimethyl-5alpha-cholesta-8,14,24-trien-3beta-ol + formate + oxidized [NADPH--hemoprotein reductase] + H2O + 2 H(+). The enzyme catalyses eburicol + 3 reduced [NADPH--hemoprotein reductase] + 3 O2 = 14-demethyleburicol + formate + 3 oxidized [NADPH--hemoprotein reductase] + 4 H2O + 4 H(+). It catalyses the reaction eburicol + reduced [NADPH--hemoprotein reductase] + O2 = 32-hydroxyeburicol + oxidized [NADPH--hemoprotein reductase] + H2O + H(+). It carries out the reaction 32-hydroxyeburicol + reduced [NADPH--hemoprotein reductase] + O2 = 32-oxoeburicol + oxidized [NADPH--hemoprotein reductase] + 2 H2O + H(+). The catalysed reaction is 32-oxoeburicol + reduced [NADPH--hemoprotein reductase] + O2 = 14-demethyleburicol + formate + oxidized [NADPH--hemoprotein reductase] + H2O + 2 H(+). Its pathway is steroid biosynthesis; sterol biosynthesis. Functionally, sterol 14-alpha demethylase; part of the gene cluster that mediates the biosynthesis of tetrahydropyranyl antifungal agent lanomycin that acts as an inhibitor of CYP51 and blocks the ergosterol biosynthesis. Sterol 14-alpha-demethylase plays a critical role in the biosynthesis of ergosterol, the major sterol component in fungal membranes that participates in a variety of functions. Acts as a self-resistant CYP51 that contains mutations found in CYP51s isolated from azole resistance strains and that is not inhibited by the final product of the cluster, lanomycin. The polypeptide is Sterol 14-alpha demethylase (Pyrenophora dematioidea (Helminthosporium dematioideum)).